Here is a 68-residue protein sequence, read N- to C-terminus: Galectin-10 (68 aa).

One can recognise a Galectin domain in the interval 1-68; sequence EPYLQVDFHT…LSISVLPDKY (68 aa).

Interacts with CEL.

The protein localises to the cytoplasm. It is found in the cytosol. The protein resides in the cytoplasmic granule. Regulates immune responses through the recognition of cell-surface glycans. Essential for the anergy and suppressive function of CD25-positive regulatory T-cells (Treg). The sequence is that of Galectin-10 (CLC) from Pongo pygmaeus (Bornean orangutan).